Here is a 423-residue protein sequence, read N- to C-terminus: Deferrochelatase (423 aa).

Residues 1–35 (MQYKDENGVNEPSRRRLLKVIGALALAGSCPVAHA) constitute a signal peptide (tat-type signal). 236–238 (GTA) contacts heme b. Protoporphyrin IX-binding positions include 236–238 (GTA) and Arg-296. Heme b-binding positions include His-329, 334 to 336 (NPR), and Arg-347.

As to quaternary structure, homodimer. Part of a ferrous iron transporter composed of EfeU, EfeO and EfeB. However, this EfeUOB tripartite iron transporter is defective in E.coli strain K12 due to a frameshift mutation in EfeU. Heme b is required as a cofactor. Exported by the Tat system. The position of the signal peptide cleavage has been experimentally proven. Can also be exported by the Sec system.

It is found in the periplasm. It carries out the reaction heme b + 2 H(+) = protoporphyrin IX + Fe(2+). Involved in the recovery of exogenous heme iron. Extracts iron from heme while preserving the protoporphyrin ring intact. Also displays peroxidase activity on guaiacol in vitro. This Escherichia coli (strain K12) protein is Deferrochelatase (efeB).